A 219-amino-acid polypeptide reads, in one-letter code: Probable GTP-binding protein EngB (219 aa).

The region spanning 31 to 205 is the EngB-type G domain; sequence VGVEIAFAGR…LSILNEWCHP (175 aa). GTP-binding positions include 39-46, 66-70, 84-87, 151-154, and 184-186; these read GRSNAGKS, GRTQL, DLPG, TKSD, and FSA. Positions 46 and 68 each coordinate Mg(2+).

Belongs to the TRAFAC class TrmE-Era-EngA-EngB-Septin-like GTPase superfamily. EngB GTPase family. Requires Mg(2+) as cofactor.

In terms of biological role, necessary for normal cell division and for the maintenance of normal septation. In Shewanella sp. (strain W3-18-1), this protein is Probable GTP-binding protein EngB.